A 2767-amino-acid polypeptide reads, in one-letter code: Serine/threonine-protein kinase ATM (2767 aa).

The 605-residue stretch at 1713–2317 (NVVMASNHCQ…FYQLYPLVFA (605 aa)) folds into the FAT domain. Residues 2419-2734 (WTNETTQCGG…KLDGREAGTM (316 aa)) enclose the PI3K/PI4K catalytic domain. The G-loop stretch occupies residues 2425–2431 (QCGGLNA). The catalytic loop stretch occupies residues 2601 to 2609 (GLGDRHTQN). Residues 2621–2645 (HIDFGIAFEQGKIQTTPETVPFRLT) form an activation loop region. Positions 2735-2767 (GDSNVEAQVERLINEATLPSNLCMLFPGWDPHL) constitute an FATC domain.

This sequence belongs to the PI3/PI4-kinase family. ATM subfamily.

The protein localises to the nucleus. It localises to the chromosome. It is found in the telomere. The catalysed reaction is L-seryl-[protein] + ATP = O-phospho-L-seryl-[protein] + ADP + H(+). The enzyme catalyses L-threonyl-[protein] + ATP = O-phospho-L-threonyl-[protein] + ADP + H(+). Functionally, serine/threonine-protein kinase which recognizes the substrate consensus sequence [ST]-Q. Required to suppress spontaneous apoptosis of proliferating cells during development, and for their proper differentiation. Required for female fertility. Protects telomeres from fusion, maybe by recruiting or maintaining chromatin-modifying complexes such as Su(var)205/HP1. May activate checkpoint signaling in response to DNA double-stranded breaks induced by low-dose ionizing radiation. May phosphorylate histone H2AV. This is Serine/threonine-protein kinase ATM (tefu) from Drosophila melanogaster (Fruit fly).